The chain runs to 278 residues: Large ribosomal subunit protein uL2 (278 aa).

Disordered stretches follow at residues 28-58 (TPEK…GGGH) and 223-278 (GVVM…KNKR). The segment covering 43-53 (RNNQGRITTRH) has biased composition (polar residues). Residues 268–278 (IRRRKTGKNKR) show a composition bias toward basic residues.

It belongs to the universal ribosomal protein uL2 family. Part of the 50S ribosomal subunit. Forms a bridge to the 30S subunit in the 70S ribosome.

In terms of biological role, one of the primary rRNA binding proteins. Required for association of the 30S and 50S subunits to form the 70S ribosome, for tRNA binding and peptide bond formation. It has been suggested to have peptidyltransferase activity; this is somewhat controversial. Makes several contacts with the 16S rRNA in the 70S ribosome. This chain is Large ribosomal subunit protein uL2, found in Nocardioides sp. (strain ATCC BAA-499 / JS614).